We begin with the raw amino-acid sequence, 301 residues long: GTPase Era (301 aa).

An Era-type G domain is found at 4 to 173 (KAGFVALIGK…LECISKYLSP (170 aa)). The tract at residues 12 to 19 (GKPNAGKS) is G1. 12 to 19 (GKPNAGKS) contributes to the GTP binding site. The segment at 38-42 (NATRK) is G2. The segment at 64 to 67 (DTPG) is G3. GTP is bound by residues 64–68 (DTPGL) and 122–125 (SKID). Positions 122–125 (SKID) are G4. Residues 152–154 (LSA) are G5. In terms of domain architecture, KH type-2 spans 204–280 (LSDEIPYESD…FLNLQVIAQK (77 aa)).

This sequence belongs to the TRAFAC class TrmE-Era-EngA-EngB-Septin-like GTPase superfamily. Era GTPase family. Monomer.

The protein resides in the cytoplasm. It localises to the cell inner membrane. An essential GTPase that binds both GDP and GTP, with rapid nucleotide exchange. Plays a role in 16S rRNA processing and 30S ribosomal subunit biogenesis and possibly also in cell cycle regulation and energy metabolism. This is GTPase Era from Helicobacter pylori (strain G27).